The sequence spans 334 residues: Cytoskeleton protein RodZ (334 aa).

The Cytoplasmic segment spans residues Met-1 to Gly-111. In terms of domain architecture, HTH cro/C1-type spans Leu-19–Leu-71. Residues Gln-30–Glu-49 constitute a DNA-binding region (H-T-H motif). A helical; Signal-anchor for type II membrane protein transmembrane segment spans residues Trp-112–Trp-132. At Trp-133–Gln-334 the chain is on the periplasmic side. Residues Leu-154–Gly-241 are disordered. Low complexity-rich tracts occupy residues Thr-176–Ala-211 and Thr-219–Gly-241.

This sequence belongs to the RodZ family.

Its subcellular location is the cell inner membrane. Functionally, cytoskeletal protein that is involved in cell-shape control through regulation of the length of the long axis. In Salmonella choleraesuis (strain SC-B67), this protein is Cytoskeleton protein RodZ.